A 414-amino-acid polypeptide reads, in one-letter code: Tryptophan synthase beta chain (414 aa).

A disordered region spans residues 1–26 (MVSTFSRQDQNYKNDDLNQPSKEGRF). Over residues 10–26 (QNYKNDDLNQPSKEGRF) the composition is skewed to basic and acidic residues. K109 is subject to N6-(pyridoxal phosphate)lysine.

This sequence belongs to the TrpB family. In terms of assembly, tetramer of two alpha and two beta chains. Pyridoxal 5'-phosphate is required as a cofactor.

The enzyme catalyses (1S,2R)-1-C-(indol-3-yl)glycerol 3-phosphate + L-serine = D-glyceraldehyde 3-phosphate + L-tryptophan + H2O. Its pathway is amino-acid biosynthesis; L-tryptophan biosynthesis; L-tryptophan from chorismate: step 5/5. Functionally, the beta subunit is responsible for the synthesis of L-tryptophan from indole and L-serine. This Prochlorococcus marinus (strain MIT 9312) protein is Tryptophan synthase beta chain.